Reading from the N-terminus, the 451-residue chain is Tubulin alpha-1 chain (451 aa).

GTP is bound at residue Gln-11. An N6-acetyllysine modification is found at Lys-40. GTP-binding residues include Glu-71, Gly-144, Thr-145, Thr-179, Asn-206, and Asn-228. Glu-71 provides a ligand contact to Mg(2+). Glu-254 is a catalytic residue.

The protein belongs to the tubulin family. As to quaternary structure, dimer of alpha and beta chains. A typical microtubule is a hollow water-filled tube with an outer diameter of 25 nm and an inner diameter of 15 nM. Alpha-beta heterodimers associate head-to-tail to form protofilaments running lengthwise along the microtubule wall with the beta-tubulin subunit facing the microtubule plus end conferring a structural polarity. Microtubules usually have 13 protofilaments but different protofilament numbers can be found in some organisms and specialized cells. Mg(2+) serves as cofactor. Post-translationally, undergoes a tyrosination/detyrosination cycle, the cyclic removal and re-addition of a C-terminal tyrosine residue by the enzymes tubulin tyrosine carboxypeptidase (TTCP) and tubulin tyrosine ligase (TTL), respectively. In terms of processing, acetylation of alpha chains at Lys-40 stabilizes microtubules and affects affinity and processivity of microtubule motors. This modification has a role in multiple cellular functions, ranging from cell motility, cell cycle progression or cell differentiation to intracellular trafficking and signaling.

The protein resides in the cytoplasm. It localises to the cytoskeleton. The catalysed reaction is GTP + H2O = GDP + phosphate + H(+). Tubulin is the major constituent of microtubules, a cylinder consisting of laterally associated linear protofilaments composed of alpha- and beta-tubulin heterodimers. Microtubules grow by the addition of GTP-tubulin dimers to the microtubule end, where a stabilizing cap forms. Below the cap, tubulin dimers are in GDP-bound state, owing to GTPase activity of alpha-tubulin. This is Tubulin alpha-1 chain (TUBA1) from Eleusine indica (Goosegrass).